The chain runs to 306 residues: tRNA dimethylallyltransferase (306 aa).

Residue 11 to 18 participates in ATP binding; it reads APTAAGKT. 13–18 provides a ligand contact to substrate; the sequence is TAAGKT.

The protein belongs to the IPP transferase family. As to quaternary structure, monomer. The cofactor is Mg(2+).

It carries out the reaction adenosine(37) in tRNA + dimethylallyl diphosphate = N(6)-dimethylallyladenosine(37) in tRNA + diphosphate. Catalyzes the transfer of a dimethylallyl group onto the adenine at position 37 in tRNAs that read codons beginning with uridine, leading to the formation of N6-(dimethylallyl)adenosine (i(6)A). The polypeptide is tRNA dimethylallyltransferase (Deinococcus radiodurans (strain ATCC 13939 / DSM 20539 / JCM 16871 / CCUG 27074 / LMG 4051 / NBRC 15346 / NCIMB 9279 / VKM B-1422 / R1)).